The following is a 177-amino-acid chain: Large ribosomal subunit protein uL10 (177 aa).

The protein belongs to the universal ribosomal protein uL10 family. In terms of assembly, part of the ribosomal stalk of the 50S ribosomal subunit. The N-terminus interacts with L11 and the large rRNA to form the base of the stalk. The C-terminus forms an elongated spine to which L12 dimers bind in a sequential fashion forming a multimeric L10(L12)X complex.

Its function is as follows. Forms part of the ribosomal stalk, playing a central role in the interaction of the ribosome with GTP-bound translation factors. This is Large ribosomal subunit protein uL10 from Xanthomonas oryzae pv. oryzae (strain MAFF 311018).